Reading from the N-terminus, the 40-residue chain is Photosystem II reaction center protein J (40 aa).

M2 is modified (N-acetylmethionine). At M2–W11 the chain is on the cytoplasmic side. Residues I12–G26 traverse the membrane as a helical segment. Over L27 to L40 the chain is Lumenal.

Belongs to the PsbJ family. As to quaternary structure, PSII is composed of 1 copy each of membrane proteins PsbA, PsbB, PsbC, PsbD, PsbE, PsbF, PsbH, PsbI, PsbJ, PsbK, PsbL, PsbM, PsbT, PsbX, PsbY, PsbZ, Psb30/Ycf12, peripheral proteins PsbO, CyanoQ (PsbQ), PsbU, PsbV and a large number of cofactors. It forms dimeric complexes. PSII binds multiple chlorophylls, carotenoids and specific lipids. serves as cofactor.

The protein resides in the cellular thylakoid membrane. One of the components of the core complex of photosystem II (PSII). PSII is a light-driven water:plastoquinone oxidoreductase that uses light energy to abstract electrons from H(2)O, generating O(2) and a proton gradient subsequently used for ATP formation. It consists of a core antenna complex that captures photons, and an electron transfer chain that converts photonic excitation into a charge separation. In terms of biological role, may play a regulatory role in PSII biogenesis. The protein is Photosystem II reaction center protein J of Thermosynechococcus vestitus (strain NIES-2133 / IAM M-273 / BP-1).